Consider the following 525-residue polypeptide: Probable bifunctional tRNA threonylcarbamoyladenosine biosynthesis protein (525 aa).

Positions 1–322 are kae1; sequence MPEKRVLGIE…FRSDQVEVTW (322 aa). Residues His106, His110, and Tyr127 each contribute to the Fe cation site. L-threonylcarbamoyladenylate-binding positions include 127–131, Asp159, Gly172, Glu176, and Asn255; that span reads YASGA. Asp283 contributes to the Fe cation binding site. In terms of domain architecture, Protein kinase spans 331 to 525; that stretch reads APGQSETAER…HEIELRGRYL (195 aa). ATP is bound by residues 338–346 and Lys355; that span reads AERGAEASV. Asp442 acts as the Proton acceptor; for kinase activity in catalysis.

This sequence in the N-terminal section; belongs to the KAE1 / TsaD family. In the C-terminal section; belongs to the protein kinase superfamily. Tyr protein kinase family. BUD32 subfamily. Component of the KEOPS complex that consists of Kae1, Bud32, Cgi121 and Pcc1; the whole complex dimerizes. Fe(2+) is required as a cofactor.

Its subcellular location is the cytoplasm. The catalysed reaction is L-seryl-[protein] + ATP = O-phospho-L-seryl-[protein] + ADP + H(+). It carries out the reaction L-threonyl-[protein] + ATP = O-phospho-L-threonyl-[protein] + ADP + H(+). The enzyme catalyses L-threonylcarbamoyladenylate + adenosine(37) in tRNA = N(6)-L-threonylcarbamoyladenosine(37) in tRNA + AMP + H(+). Its function is as follows. Required for the formation of a threonylcarbamoyl group on adenosine at position 37 (t(6)A37) in tRNAs that read codons beginning with adenine. Is a component of the KEOPS complex that is probably involved in the transfer of the threonylcarbamoyl moiety of threonylcarbamoyl-AMP (TC-AMP) to the N6 group of A37. The Kae1 domain likely plays a direct catalytic role in this reaction. The Bud32 domain probably displays kinase activity that regulates Kae1 function. The sequence is that of Probable bifunctional tRNA threonylcarbamoyladenosine biosynthesis protein from Methanocorpusculum labreanum (strain ATCC 43576 / DSM 4855 / Z).